A 443-amino-acid chain; its full sequence is KICSTOR complex protein ITFG2 (443 aa).

An FG-GAP 1; atypical repeat occupies 19–48 (FPHAICLGDVDNDALNELVVGDTSGKLSVY). S104 is modified (phosphoserine). An FG-GAP 2; atypical repeat occupies 125 to 154 (NTKVMLISDIDGDGCYELVVGYTDRVVRAF). The residue at position 219 (S219) is a Phosphoserine.

As to quaternary structure, part of the KICSTOR complex composed of KPTN, ITFG2, KICS2 and SZT2. SZT2 probably serves as a link between the other three proteins in the KICSTOR complex and may mediate the direct interaction with the GATOR complex via GATOR1. The KICSTOR complex interacts directly with the GATOR1 complex and most probably indirectly with the GATOR2 complex in an amino acid-independent manner.

It localises to the lysosome membrane. Its function is as follows. As part of the KICSTOR complex functions in the amino acid-sensing branch of the TORC1 signaling pathway. Recruits, in an amino acid-independent manner, the GATOR1 complex to the lysosomal membranes and allows its interaction with GATOR2 and the RAG GTPases. Functions upstream of the RAG GTPases and is required to negatively regulate mTORC1 signaling in absence of amino acids. In absence of the KICSTOR complex mTORC1 is constitutively localized to the lysosome and activated. The KICSTOR complex is also probably involved in the regulation of mTORC1 by glucose. This is KICSTOR complex protein ITFG2 from Mus musculus (Mouse).